A 560-amino-acid polypeptide reads, in one-letter code: DNA ligase B (560 aa).

Lys-124 serves as the catalytic N6-AMP-lysine intermediate.

The protein belongs to the NAD-dependent DNA ligase family. LigB subfamily.

It catalyses the reaction NAD(+) + (deoxyribonucleotide)n-3'-hydroxyl + 5'-phospho-(deoxyribonucleotide)m = (deoxyribonucleotide)n+m + AMP + beta-nicotinamide D-nucleotide.. Functionally, catalyzes the formation of phosphodiester linkages between 5'-phosphoryl and 3'-hydroxyl groups in double-stranded DNA using NAD as a coenzyme and as the energy source for the reaction. This is DNA ligase B from Escherichia coli O157:H7.